The primary structure comprises 381 residues: L-lactate dehydrogenase (381 aa).

An FMN hydroxy acid dehydrogenase domain is found at 1-380 (MIISASTDYR…TRDSLVRELG (380 aa)). Y24 contacts substrate. FMN contacts are provided by S106 and Q127. Y129 is a binding site for substrate. T155 lines the FMN pocket. R164 is a substrate binding site. K251 is an FMN binding site. H275 acts as the Proton acceptor in catalysis. Residue R278 participates in substrate binding. 306 to 330 (DSGIRSGLDVVRMIALGADTVLIGR) serves as a coordination point for FMN.

The protein belongs to the FMN-dependent alpha-hydroxy acid dehydrogenase family. In terms of assembly, homotetramer. The cofactor is FMN.

The protein resides in the cell inner membrane. It catalyses the reaction (S)-lactate + A = pyruvate + AH2. Catalyzes the conversion of L-lactate to pyruvate. Is coupled to the respiratory chain. This Pseudomonas putida (strain GB-1) protein is L-lactate dehydrogenase.